The following is a 388-amino-acid chain: Single-stranded DNA-binding protein 3 (388 aa).

An N-acetylmethionine modification is found at M1. The region spanning 16–48 is the LisH domain; that stretch reads AREKLALYVYEYLLHVGAQKSAQTFLSEIRWEK. Residues 101-388 form a disordered region; it reads VLGNIPPNDG…NYSPSMTMSV (288 aa). Pro residues predominate over residues 126–139; sequence GSQPSPHAQPPPHN. An asymmetric dimethylarginine mark is found at R155, R161, and R165. Composition is skewed to low complexity over residues 200–209 and 250–268; these read MQRMNPPRGM and PNSA…TYVG. The segment covering 272–282 has biased composition (pro residues); that stretch reads GGGPPGTPIMP. Positions 285-296 are enriched in polar residues; that stretch reads ADSTNSSDNIYT. The segment covering 315 to 325 has biased composition (gly residues); that stretch reads GSDGPMGGMGG. Residues 346-357 are compositionally biased toward low complexity; the sequence is NSPNNISGISNP. A phosphoserine mark is found at S347, S352, and S355. Residue T360 is modified to Phosphothreonine. Over residues 373–388 the composition is skewed to polar residues; the sequence is HSFQNDNYSPSMTMSV. 2 positions are modified to phosphoserine: S381 and S387.

As to expression, highly expressed in all hematopoietic tissues, including spleen, lymph node, peripheral blood, bone marrow, thymus, and fetal liver, with highest expression in thymus and fetal liver. Expression is also high in heart, brain, kidney, and skeletal muscle.

Its subcellular location is the nucleus. Functionally, may be involved in transcription regulation of the alpha 2(I) collagen gene where it binds to the single-stranded polypyrimidine sequences in the promoter region. This is Single-stranded DNA-binding protein 3 (SSBP3) from Homo sapiens (Human).